A 151-amino-acid polypeptide reads, in one-letter code: MIQELKADLNGKGQKHCVIVSRFNEFITESLLKGALESFRMHGVEDVTVVRVPGAYEMPVVVSKAAASKKYDSIVCLGAVIRGATAHFDLVAGESAKIGSIGVQHSIPVIFGVLTTDTIEQAIERAGTKAGNKGAEAAATAVEMVNLLSLL.

5-amino-6-(D-ribitylamino)uracil is bound by residues phenylalanine 23, 55 to 57 (AYE), and 79 to 81 (AVI). Position 84–85 (84–85 (AT)) interacts with (2S)-2-hydroxy-3-oxobutyl phosphate. The active-site Proton donor is the histidine 87. Phenylalanine 111 is a 5-amino-6-(D-ribitylamino)uracil binding site. Arginine 125 contributes to the (2S)-2-hydroxy-3-oxobutyl phosphate binding site.

Belongs to the DMRL synthase family.

The catalysed reaction is (2S)-2-hydroxy-3-oxobutyl phosphate + 5-amino-6-(D-ribitylamino)uracil = 6,7-dimethyl-8-(1-D-ribityl)lumazine + phosphate + 2 H2O + H(+). The protein operates within cofactor biosynthesis; riboflavin biosynthesis; riboflavin from 2-hydroxy-3-oxobutyl phosphate and 5-amino-6-(D-ribitylamino)uracil: step 1/2. Its function is as follows. Catalyzes the formation of 6,7-dimethyl-8-ribityllumazine by condensation of 5-amino-6-(D-ribitylamino)uracil with 3,4-dihydroxy-2-butanone 4-phosphate. This is the penultimate step in the biosynthesis of riboflavin. In Leptospira interrogans serogroup Icterohaemorrhagiae serovar copenhageni (strain Fiocruz L1-130), this protein is 6,7-dimethyl-8-ribityllumazine synthase.